The primary structure comprises 310 residues: p-hydroxybenzoic acid efflux pump subunit AaeA (310 aa).

Residues 12–32 (AITLVLVILAFIAIFRAWVYY) traverse the membrane as a helical segment.

The protein belongs to the membrane fusion protein (MFP) (TC 8.A.1) family.

The protein localises to the cell inner membrane. Forms an efflux pump with AaeB. This chain is p-hydroxybenzoic acid efflux pump subunit AaeA, found in Salmonella heidelberg (strain SL476).